Here is a 219-residue protein sequence, read N- to C-terminus: Flagellin B4 (219 aa).

Residues M1–G5 constitute a propeptide that is removed on maturation.

The protein belongs to the archaeal flagellin family.

It localises to the archaeal flagellum. In terms of biological role, flagellin is the subunit protein which polymerizes to form the filaments of archaeal flagella. The chain is Flagellin B4 (flaB4) from Pyrococcus abyssi (strain GE5 / Orsay).